The sequence spans 180 residues: Bifunctional protein PyrR (180 aa).

The PRPP-binding signature appears at 99–111 (VILVDDVLYTCRT).

It belongs to the purine/pyrimidine phosphoribosyltransferase family. PyrR subfamily. As to quaternary structure, homodimer and homohexamer; in equilibrium.

The enzyme catalyses UMP + diphosphate = 5-phospho-alpha-D-ribose 1-diphosphate + uracil. In terms of biological role, regulates transcriptional attenuation of the pyrimidine nucleotide (pyr) operon by binding in a uridine-dependent manner to specific sites on pyr mRNA. This disrupts an antiterminator hairpin in the RNA and favors formation of a downstream transcription terminator, leading to a reduced expression of downstream genes. Functionally, also displays a weak uracil phosphoribosyltransferase activity which is not physiologically significant. The protein is Bifunctional protein PyrR of Clostridium botulinum (strain Eklund 17B / Type B).